A 371-amino-acid polypeptide reads, in one-letter code: Cytochrome b (371 aa).

Helical transmembrane passes span Phe25–Met45, Trp69–Ile90, Trp105–Leu125, and Phe170–Met190. His75 is a heme b binding site. Residues His174 and His188 each contribute to the heme b site. Position 193 (His193) interacts with a ubiquinone. A run of 4 helical transmembrane segments spans residues Tyr218–Phe238, Leu280–His300, Leu312–Thr332, and Phe339–Pro358.

The protein belongs to the cytochrome b family. The cytochrome bc1 complex contains 3 respiratory subunits (MT-CYB, CYC1 and UQCRFS1), 2 core proteins (UQCRC1 and UQCRC2) and probably 6 low-molecular weight proteins. The cofactor is heme b.

The protein resides in the mitochondrion inner membrane. Its function is as follows. Component of the ubiquinol-cytochrome c reductase complex (complex III or cytochrome b-c1 complex) that is part of the mitochondrial respiratory chain. The b-c1 complex mediates electron transfer from ubiquinol to cytochrome c. Contributes to the generation of a proton gradient across the mitochondrial membrane that is then used for ATP synthesis. This is Cytochrome b (MT-CYB) from Candoia aspera (New Guinea boa).